The following is a 513-amino-acid chain: ATP synthase subunit alpha, mitochondrial (513 aa).

Position 170–177 (170–177 (GDRQTGKT)) interacts with ATP.

It belongs to the ATPase alpha/beta chains family. F-type ATPases have 2 components, CF(1) - the catalytic core - and CF(0) - the membrane proton channel. CF(1) has five subunits: alpha(3), beta(3), gamma(1), delta(1), epsilon(1). CF(0) has three main subunits: a, b and c.

It is found in the mitochondrion. The protein localises to the mitochondrion inner membrane. Functionally, mitochondrial membrane ATP synthase (F(1)F(0) ATP synthase or Complex V) produces ATP from ADP in the presence of a proton gradient across the membrane which is generated by electron transport complexes of the respiratory chain. F-type ATPases consist of two structural domains, F(1) - containing the extramembraneous catalytic core, and F(0) - containing the membrane proton channel, linked together by a central stalk and a peripheral stalk. During catalysis, ATP synthesis in the catalytic domain of F(1) is coupled via a rotary mechanism of the central stalk subunits to proton translocation. Subunits alpha and beta form the catalytic core in F(1). Rotation of the central stalk against the surrounding alpha(3)beta(3) subunits leads to hydrolysis of ATP in three separate catalytic sites on the beta subunits. Subunit alpha does not bear the catalytic high-affinity ATP-binding sites. The chain is ATP synthase subunit alpha, mitochondrial (ATPA) from Marchantia polymorpha (Common liverwort).